The following is a 116-amino-acid chain: Large ribosomal subunit protein uL18 (116 aa).

It belongs to the universal ribosomal protein uL18 family. Part of the 50S ribosomal subunit; part of the 5S rRNA/L5/L18/L25 subcomplex. Contacts the 5S and 23S rRNAs.

This is one of the proteins that bind and probably mediate the attachment of the 5S RNA into the large ribosomal subunit, where it forms part of the central protuberance. The polypeptide is Large ribosomal subunit protein uL18 (Psychrobacter arcticus (strain DSM 17307 / VKM B-2377 / 273-4)).